A 638-amino-acid chain; its full sequence is 1-deoxy-D-xylulose-5-phosphate synthase (638 aa).

Thiamine diphosphate-binding positions include histidine 76 and 117–119 (AHS). Aspartate 148 lines the Mg(2+) pocket. Thiamine diphosphate is bound by residues 149–150 (GS), asparagine 177, tyrosine 287, and glutamate 369. Asparagine 177 contacts Mg(2+).

The protein belongs to the transketolase family. DXPS subfamily. In terms of assembly, homodimer. Requires Mg(2+) as cofactor. Thiamine diphosphate serves as cofactor.

It catalyses the reaction D-glyceraldehyde 3-phosphate + pyruvate + H(+) = 1-deoxy-D-xylulose 5-phosphate + CO2. Its pathway is metabolic intermediate biosynthesis; 1-deoxy-D-xylulose 5-phosphate biosynthesis; 1-deoxy-D-xylulose 5-phosphate from D-glyceraldehyde 3-phosphate and pyruvate: step 1/1. Catalyzes the acyloin condensation reaction between C atoms 2 and 3 of pyruvate and glyceraldehyde 3-phosphate to yield 1-deoxy-D-xylulose-5-phosphate (DXP). The sequence is that of 1-deoxy-D-xylulose-5-phosphate synthase from Rhodopseudomonas palustris (strain HaA2).